The following is a 492-amino-acid chain: Aspartyl/glutamyl-tRNA(Asn/Gln) amidotransferase subunit B (492 aa).

It belongs to the GatB/GatE family. GatB subfamily. Heterotrimer of A, B and C subunits.

It catalyses the reaction L-glutamyl-tRNA(Gln) + L-glutamine + ATP + H2O = L-glutaminyl-tRNA(Gln) + L-glutamate + ADP + phosphate + H(+). The enzyme catalyses L-aspartyl-tRNA(Asn) + L-glutamine + ATP + H2O = L-asparaginyl-tRNA(Asn) + L-glutamate + ADP + phosphate + 2 H(+). Its function is as follows. Allows the formation of correctly charged Asn-tRNA(Asn) or Gln-tRNA(Gln) through the transamidation of misacylated Asp-tRNA(Asn) or Glu-tRNA(Gln) in organisms which lack either or both of asparaginyl-tRNA or glutaminyl-tRNA synthetases. The reaction takes place in the presence of glutamine and ATP through an activated phospho-Asp-tRNA(Asn) or phospho-Glu-tRNA(Gln). The protein is Aspartyl/glutamyl-tRNA(Asn/Gln) amidotransferase subunit B of Prochlorococcus marinus (strain SARG / CCMP1375 / SS120).